A 327-amino-acid chain; its full sequence is GMP reductase (327 aa).

Cysteine 176 functions as the Thioimidate intermediate in the catalytic mechanism. 205-228 is a binding site for NADP(+); sequence IIADGGIRTHGDIAKSIRFGASMV.

The protein belongs to the IMPDH/GMPR family. GuaC type 2 subfamily.

It carries out the reaction IMP + NH4(+) + NADP(+) = GMP + NADPH + 2 H(+). Catalyzes the irreversible NADPH-dependent deamination of GMP to IMP. It functions in the conversion of nucleobase, nucleoside and nucleotide derivatives of G to A nucleotides, and in maintaining the intracellular balance of A and G nucleotides. In Streptococcus pyogenes serotype M5 (strain Manfredo), this protein is GMP reductase.